The primary structure comprises 180 residues: Cytidylate kinase (180 aa).

7 to 15 (GLPGSGTST) is a binding site for ATP.

This sequence belongs to the cytidylate kinase family. Type 2 subfamily.

The protein resides in the cytoplasm. The catalysed reaction is CMP + ATP = CDP + ADP. It catalyses the reaction dCMP + ATP = dCDP + ADP. This is Cytidylate kinase (cmk) from Methanosarcina mazei (strain ATCC BAA-159 / DSM 3647 / Goe1 / Go1 / JCM 11833 / OCM 88) (Methanosarcina frisia).